The sequence spans 274 residues: Protein TIFY 11A (274 aa).

Disordered regions lie at residues 49 to 95 and 139 to 176; these read SLAL…SQPG and PIND…QEQN. The Tify domain occupies 92–127; it reads SQPGSSQLTIFFGGKVLVYNEFPVDKAKEIMEVAKQ. The span at 139-150 shows a compositional bias: polar residues; that stretch reads PINDENNNNKSS. Residues 161–185 adopt a coiled-coil conformation; the sequence is DNNHLTKEQQQQQEQNQIVERIARR. A Jas motif is present at residues 182 to 206; that stretch reads IARRASLHRFFAKRKDRAVARAPYQ. The Nuclear localization signal signature appears at 183-190; it reads ARRASLHR. Positions 206–274 are disordered; sequence QVNQNAGHHR…QSSKDLDLRL (69 aa). The segment covering 249-274 has biased composition (basic and acidic residues); that stretch reads IKSDGDKDDIMKIEEGQSSKDLDLRL.

It belongs to the TIFY/JAZ family. Homo- and heterodimer. Interacts with MYC2, MYC3, MYC4, AFPH2/NINJA, TIFY10A/JAZ1, TIFY10B/JAZ2, TIFY11B/JAZ6, TIFY5A/JAZ8 and TIFY3B/JAZ12. In terms of assembly, (Microbial infection) Interacts with the pathogenic Pseudomonas syringae HopZ1a protein. In terms of processing, (Microbial infection) Acetylated by Pseudomonas syringae HopZ1a. Ubiquitinated. Targeted for degradation by the SCF(COI1) E3 ubiquitin ligase-proteasome pathway during jasmonate signaling.

It is found in the nucleus. Functionally, repressor of jasmonate responses. In Arabidopsis thaliana (Mouse-ear cress), this protein is Protein TIFY 11A.